The chain runs to 73 residues: Small ribosomal subunit protein uS15c (73 aa).

It belongs to the universal ribosomal protein uS15 family. Part of the 30S ribosomal subunit.

It localises to the plastid. Its subcellular location is the chloroplast. This chain is Small ribosomal subunit protein uS15c (rps15), found in Welwitschia mirabilis (Tree tumbo).